The sequence spans 483 residues: Dual specificity protein kinase CLK1 (483 aa).

The interval 1–49 (MRHSKRTYCPDWDERDWDYGTWRSSSSHKRKKRSHSSAREQKRCRYDHS) is disordered. A compositionally biased stretch (basic residues) spans 26 to 36 (SSHKRKKRSHS). The short motif at 29 to 33 (KRKKR) is the Nuclear localization signal element. Over residues 37-49 (SAREQKRCRYDHS) the composition is skewed to basic and acidic residues. Position 61 is a phosphoserine (serine 61). Low complexity predominate over residues 84–111 (EPGHPYGEPGSRYQMHSSKSSGRSGRSS). A disordered region spans residues 84-146 (EPGHPYGEPG…SRSVEDDEEG (63 aa)). The span at 112-137 (YKSKHRSRHHTSQHHSHGKSHRRKRS) shows a compositional bias: basic residues. Serine 139 is modified (phosphoserine). One can recognise a Protein kinase domain in the interval 160 to 476 (YEIVDTLGEG…LKEALKHPFF (317 aa)). ATP contacts are provided by residues 166 to 174 (LGEGAFGKV) and lysine 190. Residue aspartate 287 is the Proton acceptor of the active site.

It belongs to the protein kinase superfamily. CMGC Ser/Thr protein kinase family. Lammer subfamily. As to quaternary structure, interacts with PPIG and UBL5. Post-translationally, autophosphorylates on all three types of residues.

It is found in the nucleus. The catalysed reaction is L-seryl-[protein] + ATP = O-phospho-L-seryl-[protein] + ADP + H(+). The enzyme catalyses L-threonyl-[protein] + ATP = O-phospho-L-threonyl-[protein] + ADP + H(+). It catalyses the reaction L-tyrosyl-[protein] + ATP = O-phospho-L-tyrosyl-[protein] + ADP + H(+). Regulates splicing of its own pre-mRNA according to its kinase activity; increased expression of the catalytically active form influences splicing to generate the catalytically inactive splicing variant lacking the kinase domain. Leucettine L41 inhibits its kinase activity and affects the regulation of alternative splicing mediated by phosphorylation of SR proteins. Its function is as follows. Dual specificity kinase acting on both serine/threonine and tyrosine-containing substrates. Phosphorylates serine- and arginine-rich (SR) proteins of the spliceosomal complex and may be a constituent of a network of regulatory mechanisms that enable SR proteins to control RNA splicing. Phosphorylates: SRSF1, SRSF3 and PTPN1. Regulates the alternative splicing of tissue factor (F3) pre-mRNA in endothelial cells. This Mus musculus (Mouse) protein is Dual specificity protein kinase CLK1.